The primary structure comprises 125 residues: Cu-Zn superoxide dismutase-like protein OPG175 (125 aa).

Cysteines 52 and 102 form a disulfide.

This sequence belongs to the Cu-Zn superoxide dismutase family.

It localises to the virion. The protein resides in the host cytoplasm. Functionally, superoxide dismutase-like protein with no enzymatic activity. This is Cu-Zn superoxide dismutase-like protein OPG175 (OPG175) from Homo sapiens (Human).